The sequence spans 704 residues: MPPNGAITTTPRSRMPPTTPSSGKSRPKKETLHYLAASSSTTSVDAARTLLERGANVNAIDRDGATPLHYACTHDNVAMAQLLLTFGADPMSADKLGRTAYSIAKGNTLRFLRRYKKSSNRQRLGFFRRFFACHSRNETFFIVRNNQEVAPLRPTALAEAASISFNRGNVLTNSYRCAKKKIRATFHAIRRSRSNSTATLQDVVLTSEGIRTVTTPSRRAPKATVYAKRSMSVSDLLLIPDRRDIKNEDVKTRGSPVKKTRGTGRSRTPEAILNPRKQRTPVNHHKRSKSQETKLVAMPSPNSMAYYNTSRARNAGLRPAPSAPPLSPEPAIAAVKTPKTPTTPKTSKGRSKSPANTTAYFTADESLELLGNNMEKLNIESKSAKSSKLKTPSKPTTSSSTSFSSAEDDKEAEVSTPTTVDDGEIRKIRRLREGELKSELKKFGISPAGPLDARTRRLYEKKLLIERRKITNRGYSPDADVVSCRNSPQLELVLRNGFLPADFASRARKCDENVRSEFSGNGFGYNAFCYLIMDPRILGSNVENLTLETFVRSIFYVGKGSKNRPLAHFIDARNERRDKLDKLKTCEKLKTIDELWTLGFGIPRHEISHGVSDEEAFVREASIIEAVKLKNLRNKKAGEFHGTTKSWDNITKSEYGTFLLDRALSTLKLEGIRLITEDNLPDSLYPYVNNRRGAGGGRTPKTPK.

Residues 1 to 29 (MPPNGAITTTPRSRMPPTTPSSGKSRPKK) are disordered. Positions 8–22 (TTTPRSRMPPTTPSS) are enriched in low complexity. 2 ANK repeats span residues 28–59 (KKETLHYLAASSSTTSVDAARTLLERGANVNA) and 63–93 (DGATPLHYACTHDNVAMAQLLLTFGADPMSA). 3 disordered regions span residues 247–293 (NEDV…SQET), 314–358 (NAGL…ANTT), and 381–421 (SKSA…TTVD). Basic residues predominate over residues 276–288 (RKQRTPVNHHKRS). Low complexity-rich tracts occupy residues 329–346 (EPAIAAVKTPKTPTTPKT) and 384–405 (AKSSKLKTPSKPTTSSSTSFSS). Positions 425–470 (IRKIRRLREGELKSELKKFGISPAGPLDARTRRLYEKKLLIERRKI) constitute an LEM domain. One can recognise a GIY-YIG domain in the interval 525 to 635 (YNAFCYLIMD…AVKLKNLRNK (111 aa)).

In terms of processing, phosphorylated. Phosphorylated during telophase when localized at the midbody.

The protein resides in the cytoplasm. It is found in the nucleus. Its subcellular location is the chromosome. The protein localises to the midbody. It localises to the cytoskeleton. The protein resides in the spindle. Inhibited by EDTA. Functionally, endonuclease which, in association with baf-1, plays an essential role during embryogenesis in the DNA repair response following DNA damage probably by ensuring proper chromosome segregation. Also required during postembryonic cell divisions after DNA damage caused by ionizing radiation to ensure normal cell proliferation. Resolves chromatin bridges in late mitosis that result from incomplete DNA replication, defective chromosome condensation or unresolved recombination intermediates. Together with brc-1, contributes to genome integrity by resolving mitotic chromatin bridges that result from incomplete processing of DNA breaks. In parallel to the slx-1/mus-81 pathway, acts in processing early recombination intermediates in meiotic prophase I to prevent illegitimate recombination. Also involved in processing remaining, erroneous recombination intermediates that persist into the second meiotic division. The polypeptide is Ankyrin repeat and LEM domain-containing protein 1 homolog (Caenorhabditis elegans).